The primary structure comprises 45 residues: Photosystem II reaction center protein K (45 aa).

A propeptide spanning residues 1 to 8 (MEAALLLA) is cleaved from the precursor. The chain crosses the membrane as a helical span at residues 24 to 44 (LPIIPVFFLLLAFVWQAAVGF).

It belongs to the PsbK family. PSII is composed of 1 copy each of membrane proteins PsbA, PsbB, PsbC, PsbD, PsbE, PsbF, PsbH, PsbI, PsbJ, PsbK, PsbL, PsbM, PsbT, PsbX, PsbY, PsbZ, Psb30/Ycf12, peripheral proteins PsbO, CyanoQ (PsbQ), PsbU, PsbV and a large number of cofactors. It forms dimeric complexes.

It localises to the cellular thylakoid membrane. Functionally, one of the components of the core complex of photosystem II (PSII). PSII is a light-driven water:plastoquinone oxidoreductase that uses light energy to abstract electrons from H(2)O, generating O(2) and a proton gradient subsequently used for ATP formation. It consists of a core antenna complex that captures photons, and an electron transfer chain that converts photonic excitation into a charge separation. The protein is Photosystem II reaction center protein K of Nostoc sp. (strain PCC 7120 / SAG 25.82 / UTEX 2576).